A 584-amino-acid polypeptide reads, in one-letter code: Zinc finger and BTB domain-containing protein 7A (584 aa).

A BTB domain is found at 34–101 (CDVVILVEGR…AYTATLTVST (68 aa)). Positions 220–313 (YGPGPPAERP…EDGDGPDVDG (94 aa)) are disordered. The segment at 277–584 (EEEAASLSEA…TDGNFTAGLA (308 aa)) is mediates interaction with KHDRBS1. A compositionally biased stretch (low complexity) spans 281–290 (ASLSEAAPEP). S337 and S341 each carry phosphoserine. The mediates interaction with RELA stretch occupies residues 349–584 (MDYYLKYFSG…TDGNFTAGLA (236 aa)). The segment at 377–584 (RAKAFQKCPI…TDGNFTAGLA (208 aa)) is mediates interaction with SMAD4. 2 consecutive C2H2-type zinc fingers follow at residues 382-404 (QKCP…IRTH) and 410-432 (YECN…MRKH). K436 participates in a covalent cross-link: Glycyl lysine isopeptide (Lys-Gly) (interchain with G-Cter in SUMO2). The segment at 438 to 460 (YLCQQCGAAFAHNYDLKNHMRVH) adopts a C2H2-type 3 zinc-finger fold. The segment at 466-490 (YQCDSCCKTFVRSDHLHRHLKKDGC) adopts a C2H2-type 4; atypical zinc-finger fold. The disordered stretch occupies residues 486 to 584 (KKDGCNGVPS…TDGNFTAGLA (99 aa)). Low complexity predominate over residues 505–527 (GGAPDPSPGATATPGAPAQPSSP). Phosphoserine occurs at positions 511, 525, and 526. The span at 528-540 (DARRNGQEKHFKD) shows a compositional bias: basic and acidic residues. K539 participates in a covalent cross-link: Glycyl lysine isopeptide (Lys-Gly) (interchain with G-Cter in SUMO2). Position 549 is a phosphoserine (S549). Gly residues predominate over residues 560 to 572 (GAGGGGDSGGGPG).

Homodimer. Interacts with BCL6. Interacts with RELA; involved in the control by RELA of the accessibility of target gene promoters. Interacts with AR (via NR LBD domain); the interaction is direct and androgen-dependent. Interacts with NCOR1. Interacts with NCOR2. Interacts with SMAD4; the interaction is direct and stimulated by TGFB1. Interacts with HDAC1. Interacts with SP1; ZBTB7A prevents the binding to GC-rich motifs in promoters and represses the transcriptional activity of SP1. Interacts with the DNA-dependent protein kinase complex/DNA-PKc. Interacts with KHDRBS1; negatively regulates KHDRBS1 splicing activity. Sumoylated. Undergoes sumoylation with SUMO1 that may regulate its transcriptional activity. In terms of tissue distribution, widely expressed. In normal thymus, expressed in medullary epithelial cells and Hassle's corpuscles (at protein level). In tonsil, expressed in squamous epithelium and germinal center lymphocytes (at protein level). Up-regulated in a subset of lymphomas, as well as in a subset of breast, lung, colon, prostate and bladder carcinomas (at protein level). Expressed in adipose tissues.

It localises to the nucleus. Functionally, transcription factor that represses the transcription of a wide range of genes involved in cell proliferation and differentiation. Directly and specifically binds to the consensus sequence 5'-[GA][CA]GACCCCCCCCC-3' and represses transcription both by regulating the organization of chromatin and through the direct recruitment of transcription factors to gene regulatory regions. Negatively regulates SMAD4 transcriptional activity in the TGF-beta signaling pathway through these two mechanisms. That is, recruits the chromatin regulator HDAC1 to the SMAD4-DNA complex and in parallel prevents the recruitment of the transcriptional activators CREBBP and EP300. Collaborates with transcription factors like RELA to modify the accessibility of gene transcription regulatory regions to secondary transcription factors. Also directly interacts with transcription factors like SP1 to prevent their binding to DNA. Functions as an androgen receptor/AR transcriptional corepressor by recruiting NCOR1 and NCOR2 to the androgen response elements/ARE on target genes. Thereby, negatively regulates androgen receptor signaling and androgen-induced cell proliferation. Involved in the switch between fetal and adult globin expression during erythroid cells maturation. Through its interaction with the NuRD complex regulates chromatin at the fetal globin genes to repress their transcription. Specifically represses the transcription of the tumor suppressor ARF isoform from the CDKN2A gene. Efficiently abrogates E2F1-dependent CDKN2A transactivation. Regulates chondrogenesis through the transcriptional repression of specific genes via a mechanism that also requires histone deacetylation. Regulates cell proliferation through the transcriptional regulation of genes involved in glycolysis. Involved in adipogenesis through the regulation of genes involved in adipocyte differentiation. Plays a key role in the differentiation of lymphoid progenitors into B and T lineages. Promotes differentiation towards the B lineage by inhibiting the T-cell instructive Notch signaling pathway through the specific transcriptional repression of Notch downstream target genes. Also regulates osteoclast differentiation. May also play a role, independently of its transcriptional activity, in double-strand break repair via classical non-homologous end joining/cNHEJ. Recruited to double-strand break sites on damage DNA, interacts with the DNA-dependent protein kinase complex and directly regulates its stability and activity in DNA repair. May also modulate the splicing activity of KHDRBS1 toward BCL2L1 in a mechanism which is histone deacetylase-dependent and thereby negatively regulates the pro-apoptotic effect of KHDRBS1. This Homo sapiens (Human) protein is Zinc finger and BTB domain-containing protein 7A.